The chain runs to 424 residues: Elongation factor 1-alpha (424 aa).

Residues 5 to 223 (KPHLNLITIG…DAFKVPEKPI (219 aa)) enclose the tr-type G domain. The interval 14 to 21 (GHVDHGKS) is G1. 14–21 (GHVDHGKS) is a GTP binding site. S21 provides a ligand contact to Mg(2+). The segment at 70-74 (GVTID) is G2. Positions 91–94 (DAPG) are G3. Residues 91-95 (DAPGH) and 148-151 (NKMD) each bind GTP. Residues 148-151 (NKMD) form a G4 region. A G5 region spans residues 187-189 (SGY).

The protein belongs to the TRAFAC class translation factor GTPase superfamily. Classic translation factor GTPase family. EF-Tu/EF-1A subfamily.

Its subcellular location is the cytoplasm. It carries out the reaction GTP + H2O = GDP + phosphate + H(+). Functionally, GTP hydrolase that promotes the GTP-dependent binding of aminoacyl-tRNA to the A-site of ribosomes during protein biosynthesis. This is Elongation factor 1-alpha from Thermoplasma volcanium (strain ATCC 51530 / DSM 4299 / JCM 9571 / NBRC 15438 / GSS1).